Consider the following 673-residue polypeptide: Pesticin receptor (673 aa).

The first 22 residues, 1–22 (MKMTRLYPLALGGLLLPAIANA), serve as a signal peptide directing secretion. Residues 30–37 (STLEVTAS) carry the TonB box motif. Positions 41 to 155 (SRSASANNVS…QGGIINIVTQ (115 aa)) constitute a TBDR plug domain. A TBDR beta-barrel domain is found at 160–672 (TPRGYIEGGV…TVGINTRIDF (513 aa)). A TonB C-terminal box motif is present at residues 657-673 (QVNMGRTVGINTRIDFF).

The protein belongs to the TonB-dependent receptor family.

Its subcellular location is the cell outer membrane. In terms of biological role, receptor for the bacteriocin pesticin and for the siderophore yersiniabactin. This chain is Pesticin receptor (fyuA), found in Yersinia enterocolitica.